Here is a 160-residue protein sequence, read N- to C-terminus: MKTYSAKPAEISKKWILIDATNLVLGRLAAKVAVVLRGKDKPTYTPHMDCGNNVIIINAEHVKLTGDKSNAKSGKFYYRHSGFPGGIKVTTAGKILQSNYPERIIQLAVKRMLPSNKLGRKQFSNLYVYKGQTHPHAAQTPVLYDFAGKNSKNIRNQNIV.

This sequence belongs to the universal ribosomal protein uL13 family. In terms of assembly, part of the 50S ribosomal subunit.

Its function is as follows. This protein is one of the early assembly proteins of the 50S ribosomal subunit, although it is not seen to bind rRNA by itself. It is important during the early stages of 50S assembly. The protein is Large ribosomal subunit protein uL13 of Orientia tsutsugamushi (strain Boryong) (Rickettsia tsutsugamushi).